We begin with the raw amino-acid sequence, 393 residues long: Mitogen-activated protein kinase homolog NTF4 (393 aa).

The interval 1-32 (MDGPAHQTDTVMSDAAGQQPAPPSQPVAGIDN) is disordered. The 286-residue stretch at 60–345 (KPPIMPIGKG…VEDALAHPYL (286 aa)) folds into the Protein kinase domain. Residues 66-74 (IGKGAYGIV) and Lys89 each bind ATP. Asp186 functions as the Proton acceptor in the catalytic mechanism. Position 218 is a phosphothreonine (Thr218). Positions 218–220 (TEY) match the TXY motif. Position 220 is a phosphotyrosine (Tyr220).

This sequence belongs to the protein kinase superfamily. CMGC Ser/Thr protein kinase family. MAP kinase subfamily. It depends on Mg(2+) as a cofactor. Post-translationally, dually phosphorylated on Thr-218 and Tyr-220, which activates the enzyme. Very low autophosphorylation, although dramatically increased when Mn(2+) is added to the reaction instead of Mg(2+).

The catalysed reaction is L-seryl-[protein] + ATP = O-phospho-L-seryl-[protein] + ADP + H(+). It carries out the reaction L-threonyl-[protein] + ATP = O-phospho-L-threonyl-[protein] + ADP + H(+). With respect to regulation, activated by tyrosine and threonine phosphorylation. The protein is Mitogen-activated protein kinase homolog NTF4 (NTF4) of Nicotiana tabacum (Common tobacco).